A 154-amino-acid chain; its full sequence is OCIA domain-containing protein 2 (154 aa).

The segment at 1–23 (MASVSTHENQEKGPHLPPPSKQS) is disordered. The region spanning 1–120 (MASVSTHENQ…HSFEGQLRGA (120 aa)) is the OCIA domain. Position 41 is an N6-acetyllysine (Lys-41).

As to quaternary structure, interacts (via OCIA domain) with OCIAD1/ASRIJ and STAT3.

It is found in the endosome. Its subcellular location is the mitochondrion. The protein localises to the mitochondrion inner membrane. Functionally, has an essential role in the assembly of mitochondrial respiratory chain complex III. Is also required for STAT3 activation and plays a role in cell migration. The sequence is that of OCIA domain-containing protein 2 (OCIAD2) from Bos taurus (Bovine).